Here is a 108-residue protein sequence, read N- to C-terminus: Pyrimidine/purine nucleoside phosphorylase (108 aa).

Belongs to the nucleoside phosphorylase PpnP family.

The enzyme catalyses a purine D-ribonucleoside + phosphate = a purine nucleobase + alpha-D-ribose 1-phosphate. The catalysed reaction is adenosine + phosphate = alpha-D-ribose 1-phosphate + adenine. It catalyses the reaction cytidine + phosphate = cytosine + alpha-D-ribose 1-phosphate. It carries out the reaction guanosine + phosphate = alpha-D-ribose 1-phosphate + guanine. The enzyme catalyses inosine + phosphate = alpha-D-ribose 1-phosphate + hypoxanthine. The catalysed reaction is thymidine + phosphate = 2-deoxy-alpha-D-ribose 1-phosphate + thymine. It catalyses the reaction uridine + phosphate = alpha-D-ribose 1-phosphate + uracil. It carries out the reaction xanthosine + phosphate = alpha-D-ribose 1-phosphate + xanthine. In terms of biological role, catalyzes the phosphorolysis of diverse nucleosides, yielding D-ribose 1-phosphate and the respective free bases. Can use uridine, adenosine, guanosine, cytidine, thymidine, inosine and xanthosine as substrates. Also catalyzes the reverse reactions. This Polaromonas sp. (strain JS666 / ATCC BAA-500) protein is Pyrimidine/purine nucleoside phosphorylase.